The following is a 91-amino-acid chain: Protein translocase subunit SecG (91 aa).

The next 2 membrane-spanning stretches (helical) occupy residues 16–36 (HTFL…VVLL) and 71–91 (LTII…YLGM).

This sequence belongs to the SecG family. Component of the Sec protein translocase complex. Heterotrimer consisting of SecY, SecE and SecG subunits. The heterotrimers can form oligomers, although 1 heterotrimer is thought to be able to translocate proteins. Interacts with SecDF, and other proteins may be involved. The channel interacts with SecA via subunit SecY. Also part of the accessory SecA2/SecY2 protein translocation apparatus required to export cell wall protein GspB.

Its subcellular location is the cell membrane. Its function is as follows. Subunit of the protein translocation channel SecYEG. While not essential, it considerably increases the export efficiency of extracellular proteins. The chain is Protein translocase subunit SecG from Staphylococcus aureus (strain NCTC 8325 / PS 47).